A 193-amino-acid polypeptide reads, in one-letter code: Ion-translocating oxidoreductase complex subunit A (193 aa).

A run of 6 helical transmembrane segments spans residues L5–L25, A38–L58, A65–V85, V102–L122, I134–M154, and A171–V191.

It belongs to the NqrDE/RnfAE family. In terms of assembly, the complex is composed of six subunits: RnfA, RnfB, RnfC, RnfD, RnfE and RnfG.

It localises to the cell inner membrane. Part of a membrane-bound complex that couples electron transfer with translocation of ions across the membrane. This chain is Ion-translocating oxidoreductase complex subunit A, found in Hahella chejuensis (strain KCTC 2396).